We begin with the raw amino-acid sequence, 1138 residues long: Nuclear pore complex-interacting protein family member B13 (1138 aa).

The helical transmembrane segment at 73-93 (VVITLWIVYLWVSLLKTIFWS) threads the bilayer. Disordered regions lie at residues 242–578 (RMGH…NIKT) and 747–1138 (ERLR…RRLS). Residues 252–263 (QQHSITDNSLSL) show a composition bias toward polar residues. Pro residues predominate over residues 349–359 (PLPPSAPPSAP). 10 stretches are compositionally biased toward basic and acidic residues: residues 406–416 (DNIKTPAERLR), 448–458 (DNIKTPAERLR), 490–500 (DNIKTPAERLR), 532–542 (DNIKTPAERLR), 782–792 (DNIKTPAERLR), 824–834 (DNIKTPAERLR), 866–876 (DNIKTPAERLR), 908–918 (DNIKTPAERLR), 950–960 (DNIKTPAERLR), and 992–1002 (DNIKTPAERLR).

This sequence belongs to the NPIP family.

Its subcellular location is the membrane. The polypeptide is Nuclear pore complex-interacting protein family member B13 (Homo sapiens (Human)).